Consider the following 405-residue polypeptide: Plasma serine protease inhibitor (405 aa).

The signal sequence occupies residues 1-19 (MRFFPILCLVLFISHGVAS). A propeptide spans 20-24 (RRHSH) (removed in mature form). N-linked (GlcNAc...) asparagine glycosylation occurs at Asn247.

This sequence belongs to the serpin family. As to quaternary structure, forms protease inhibiting heterodimers in extracellular body fluids with serine proteases such as activated protein C/coagulation factor V/F5, acrosin/ACR, chymotrypsinogen B/CTRB1, prothrombin/F2, factor Xa/F10, factor XI/F11, kallikrein/KLKB1, tissue kallikrein, trypsin/PRSS1, prostate specific antigen/KLK3, tissue plasminogen activator/PLAT and urinary plasminogen activator/PLAU. Forms membrane-anchored serine proteases inhibiting heterodimers with TMPRSS7 and TMPRSS11E. Interacts with SEMG2. Post-translationally, N-glycosylated; glycans consist of a mixture of sialylated bi- (including sialyl-Lewis X epitopes), tri- and tetra-antennary complex-type chains; affects the maximal heparin- and thrombomodulin-enhanced rates of thrombin inhibition. O-glycosylated; further modified with 2 sialic acid residues. Proteolytically cleaved at the N-terminus; inhibits slightly the heparin- and thrombomodulin-enhanced rates of thrombin inhibition. In terms of processing, proteolytically cleaved. Inhibition of proteases is accompanied by formation of a stable enzyme-inhibitor complex and by degradation of the serpin to lower molecular weight derivatives. As to expression, not detected in blood plasma (at protein level). Expressed in testis, epididymis, seminal vesicles, prostate and ovaries.

Its subcellular location is the secreted. It is found in the extracellular space. With respect to regulation, its inhibitory activity is greatly enhanced in the presence of glycosaminoglycans, heparin, thrombomodulin and phospholipids vesicles. In terms of biological role, heparin-dependent serine protease inhibitor acting in body fluids and secretions. Inactivates serine proteases by binding irreversibly to their serine activation site. Involved in the regulation of intravascular and extravascular proteolytic activities. Plays hemostatic roles in the blood plasma. Acts as a procoagulant and pro-inflammatory factor by inhibiting the anticoagulant activated protein C factor as well as the generation of activated protein C factor by the thrombin/thrombomodulin complex. Acts as an anticoagulant factor by inhibiting blood coagulation factors like prothrombin, factor XI, factor Xa, plasma kallikrein and fibrinolytic enzymes such as tissue- and urinary-type plasminogen activators. In seminal plasma, inactivates several serine proteases implicated in the reproductive system. Inhibits the serpin acrosin; indirectly protects component of the male genital tract from being degraded by excessive released acrosin. Inhibits tissue- and urinary-type plasminogen activator, prostate-specific antigen and kallikrein activities; has a control on the sperm motility and fertilization. Inhibits the activated protein C-catalyzed degradation of SEMG1 and SEMG2; regulates the degradation of semenogelin during the process of transfer of spermatozoa from the male reproductive tract into the female tract. In urine, inhibits urinary-type plasminogen activator and kallikrein activities. Inactivates membrane-anchored serine proteases activities such as MPRSS7 and TMPRSS11E. Inhibits urinary-type plasminogen activator-dependent tumor cell invasion and metastasis. May also play a non-inhibitory role in seminal plasma and urine as a hydrophobic hormone carrier by its binding to retinoic acid. This Mus musculus (Mouse) protein is Plasma serine protease inhibitor (Serpina5).